A 428-amino-acid polypeptide reads, in one-letter code: MRVVILGSGVVGVASAYYLARAGHEVTVIDREAGPALETSFANAGQISPGYAAPWAAPGVPLKAVKWMFEKHAPLAIRLDGTRFQLQWMYQMLRNCTAERYAVNKGRMVRLAEYSRDCLQALRADTGIQYEGRTGGTLQLFRTQQQLDGAAKDIAVLQEANVPFELLSPADLKKAEPALAAVSHKLTGGLRLPGDETGDCQLFTTRLAALAESLGVKFRYNTPIDALAIAGGKIAGVQCGSETVRADAYVVALGSYSTSFISNLMKIPVYPLKGYSITAPIVNEAAAPVSTVLDETYKIAITRFDQRIRVGGMAEIVGFDKKLRAARRETLEMCVNDLFPGGGDTSKATFWTGLRPMTPDGTPIVGRTPVSNLFLNTGHGTLGWTMSCGSGQLLADLISGKMPAIQADDLSVHRYLKDVAGQTRPAYA.

An FAD-binding site is contributed by 3-17; that stretch reads VVILGSGVVGVASAY.

Belongs to the DadA oxidoreductase family. FAD serves as cofactor.

It carries out the reaction a D-alpha-amino acid + A + H2O = a 2-oxocarboxylate + AH2 + NH4(+). Its pathway is amino-acid degradation; D-alanine degradation; NH(3) and pyruvate from D-alanine: step 1/1. Oxidative deamination of D-amino acids. This is D-amino acid dehydrogenase from Burkholderia lata (strain ATCC 17760 / DSM 23089 / LMG 22485 / NCIMB 9086 / R18194 / 383).